The sequence spans 355 residues: Cyclin-D1-binding protein 1 (355 aa).

An N-acetylalanine modification is found at alanine 2. Interaction with TCF3 regions lie at residues 2-181 and 147-355; these read ASST…VDLV and ISCN…AVEL. Residues 2-187 form an interaction with RPLP0 region; sequence ASSTTPVSFL…VDLVKDAHEE (186 aa). Residues 2–205 are required for interaction with CCND1; that stretch reads ASSTTPVSFL…DPYCGLLDDS (204 aa). Positions 203–224 are disordered; that stretch reads DDSEDNSDSHHNEDGVGLPSNR. Residues 235–355 are interaction with RPLP0; it reads LITPCLALVR…KELTQRAVEL (121 aa).

The protein belongs to the CCNDBP1 family. Interacts with CCND1 and GRAP2. May also interact with COPS5, RPLP0, SIRT6, SYF2 and TCF3. Phosphorylated.

Its subcellular location is the cytoplasm. It localises to the nucleus. May negatively regulate cell cycle progression. May act at least in part via inhibition of the cyclin-D1/CDK4 complex, thereby preventing phosphorylation of RB1 and blocking E2F-dependent transcription. The sequence is that of Cyclin-D1-binding protein 1 (Ccndbp1) from Rattus norvegicus (Rat).